Consider the following 484-residue polypeptide: Glycogen synthase (484 aa).

Lys15 is a binding site for ADP-alpha-D-glucose.

This sequence belongs to the glycosyltransferase 1 family. Bacterial/plant glycogen synthase subfamily.

It carries out the reaction [(1-&gt;4)-alpha-D-glucosyl](n) + ADP-alpha-D-glucose = [(1-&gt;4)-alpha-D-glucosyl](n+1) + ADP + H(+). The protein operates within glycan biosynthesis; glycogen biosynthesis. In terms of biological role, synthesizes alpha-1,4-glucan chains using ADP-glucose. The polypeptide is Glycogen synthase (Geotalea uraniireducens (strain Rf4) (Geobacter uraniireducens)).